The chain runs to 246 residues: tRNA1(Val) (adenine(37)-N6)-methyltransferase (246 aa).

The protein belongs to the methyltransferase superfamily. tRNA (adenine-N(6)-)-methyltransferase family.

The protein resides in the cytoplasm. The catalysed reaction is adenosine(37) in tRNA1(Val) + S-adenosyl-L-methionine = N(6)-methyladenosine(37) in tRNA1(Val) + S-adenosyl-L-homocysteine + H(+). Functionally, specifically methylates the adenine in position 37 of tRNA(1)(Val) (anticodon cmo5UAC). The protein is tRNA1(Val) (adenine(37)-N6)-methyltransferase of Shewanella halifaxensis (strain HAW-EB4).